A 614-amino-acid polypeptide reads, in one-letter code: Kelch-like protein 40 (614 aa).

Residues 33-100 form the BTB domain; the sequence is IDCVLKIQGK…IYTSEIEITE (68 aa). Residues 135-237 form the BACK domain; it reads CLAIFRLGLL…PQDYIKNKVE (103 aa). 5 Kelch repeats span residues 353-405, 406-455, 456-503, 505-550, and 552-606; these read QLFV…ESDN, SIYL…SHDN, LVYV…VHKG, ILIA…SMNG, and LYAI…AARL.

It belongs to the KLHL40 family. In terms of assembly, component of the BCR(KLHL40) E3 ubiquitin ligase complex.

The protein localises to the cytoplasm. It localises to the myofibril. Its subcellular location is the sarcomere. It is found in the a band. The protein resides in the i band. Substrate-specific adapter of a BCR (BTB-CUL3-RBX1) E3 ubiquitin ligase complex that acts as a key regulator of skeletal muscle development. This chain is Kelch-like protein 40 (klhl40), found in Xenopus tropicalis (Western clawed frog).